The following is a 426-amino-acid chain: NADH-quinone oxidoreductase subunit H 1 (426 aa).

Helical transmembrane passes span 22–42 (LWATVYILVIFGVASVAVMLM), 91–111 (FLFWMAPVTVMMTAFTTYLVI), 124–144 (IGVLFMIGISSLGVLAVVMAG), 163–183 (MVSYEVAMGLAIVSVLMMTSL), 206–226 (FIFKFFPTGLVAFVIFAIAMV), 258–278 (LFFLGEYVAMIAVSSIAVTLW), 299–319 (FSVFPALLFFVLAAGCFIGWV), 331–351 (AIGLGIFGVLLGMIGAVLLIP), 357–377 (VSDIFWFSAKVGVFMYLYIWY), and 392–412 (IGWKVLLPVSLGVLIVTAVLG).

This sequence belongs to the complex I subunit 1 family. As to quaternary structure, NDH-1 is composed of 14 different subunits. Subunits NuoA, H, J, K, L, M, N constitute the membrane sector of the complex.

It localises to the cell inner membrane. The catalysed reaction is a quinone + NADH + 5 H(+)(in) = a quinol + NAD(+) + 4 H(+)(out). Functionally, NDH-1 shuttles electrons from NADH, via FMN and iron-sulfur (Fe-S) centers, to quinones in the respiratory chain. The immediate electron acceptor for the enzyme in this species is believed to be ubiquinone. Couples the redox reaction to proton translocation (for every two electrons transferred, four hydrogen ions are translocated across the cytoplasmic membrane), and thus conserves the redox energy in a proton gradient. This subunit may bind ubiquinone. The sequence is that of NADH-quinone oxidoreductase subunit H 1 from Koribacter versatilis (strain Ellin345).